The sequence spans 107 residues: Essential MCU regulator, mitochondrial (107 aa).

Residues M1 to R52 constitute a mitochondrion transit peptide. The segment at M1–R52 is interaction with MAIP1. The Mitochondrial matrix segment spans residues G54–F65. A helical membrane pass occupies residues G66–S85. The short motif at G81–S85 is the GXXXX[G/A/S] element. Over K86–D107 the chain is Mitochondrial intermembrane.

This sequence belongs to the SMDT1/EMRE family. As to quaternary structure, component of the uniplex complex, composed of MCU, EMRE/SMDT1, MICU1 and MICU2 (or MICU3) in a 4:4:1:1 stoichiometry. The number of EMRE/SMDT1 molecules is hovewer variable, ranging from 1 to 4 copies per uniplex complex, leading to uniplex complexes with distinct gatekeeping profiles. Interacts (via its C-terminal poly-Asp tail) with MCUR1; the interaction is direct. Unprocessed form interacts (via transit peptide) with MAIP1. Post-translationally, undergoes proteolytic degradation in neurons: degraded by AFG3L2 and SPG7 before SMDT1/EMRE assembly with the uniporter complex, limiting the availability of SMDT1/EMRE for MCU assembly and promoting efficient assembly of gatekeeper subunits with MCU.

Its subcellular location is the mitochondrion inner membrane. Its function is as follows. Essential regulatory subunit of the mitochondrial calcium uniporter complex (uniplex), a complex that mediates calcium uptake into mitochondria. Required to bridge the calcium-sensing proteins MICU1 with the calcium-conducting subunit MCU. Acts by mediating activation of MCU and retention of MICU1 to the MCU pore, in order to ensure tight regulation of the uniplex complex and appropriate responses to intracellular calcium signaling. This chain is Essential MCU regulator, mitochondrial, found in Homo sapiens (Human).